A 688-amino-acid polypeptide reads, in one-letter code: DNA-directed RNA polymerase subunit beta' (688 aa).

Positions 69, 71, 87, and 90 each coordinate Zn(2+). Mg(2+) contacts are provided by D497, D499, and D501.

It belongs to the RNA polymerase beta' chain family. RpoC1 subfamily. In plastids the minimal PEP RNA polymerase catalytic core is composed of four subunits: alpha, beta, beta', and beta''. When a (nuclear-encoded) sigma factor is associated with the core the holoenzyme is formed, which can initiate transcription. Mg(2+) is required as a cofactor. The cofactor is Zn(2+).

It is found in the plastid. Its subcellular location is the chloroplast. The enzyme catalyses RNA(n) + a ribonucleoside 5'-triphosphate = RNA(n+1) + diphosphate. Functionally, DNA-dependent RNA polymerase catalyzes the transcription of DNA into RNA using the four ribonucleoside triphosphates as substrates. This is DNA-directed RNA polymerase subunit beta' from Sinapis alba (White mustard).